We begin with the raw amino-acid sequence, 92 residues long: Small ribosomal subunit protein uS19 (92 aa).

Belongs to the universal ribosomal protein uS19 family.

Protein S19 forms a complex with S13 that binds strongly to the 16S ribosomal RNA. This chain is Small ribosomal subunit protein uS19, found in Xanthobacter autotrophicus (strain ATCC BAA-1158 / Py2).